We begin with the raw amino-acid sequence, 496 residues long: Transcription termination/antitermination protein NusA (496 aa).

The 66-residue stretch at 135-200 folds into the S1 motif domain; that stretch reads GQIITGIVKK…RGAQLFISRS (66 aa). In terms of domain architecture, KH spans 302–370; it reads CHTMDIAVDI…KNLNINENII (69 aa). 2 repeat units span residues 364–414 and 440–490. Residues 364–490 are 2 X 51 AA approximate repeats; the sequence is NINENIIKIL…LLIMTARNIC (127 aa).

Belongs to the NusA family. As to quaternary structure, monomer. Binds directly to the core enzyme of the DNA-dependent RNA polymerase and to nascent RNA.

The protein localises to the cytoplasm. In terms of biological role, participates in both transcription termination and antitermination. The polypeptide is Transcription termination/antitermination protein NusA (Buchnera aphidicola subsp. Acyrthosiphon pisum (strain APS) (Acyrthosiphon pisum symbiotic bacterium)).